Consider the following 342-residue polypeptide: S-adenosylmethionine:tRNA ribosyltransferase-isomerase (342 aa).

It belongs to the QueA family. In terms of assembly, monomer.

The protein resides in the cytoplasm. It carries out the reaction 7-aminomethyl-7-carbaguanosine(34) in tRNA + S-adenosyl-L-methionine = epoxyqueuosine(34) in tRNA + adenine + L-methionine + 2 H(+). It participates in tRNA modification; tRNA-queuosine biosynthesis. Its function is as follows. Transfers and isomerizes the ribose moiety from AdoMet to the 7-aminomethyl group of 7-deazaguanine (preQ1-tRNA) to give epoxyqueuosine (oQ-tRNA). In Sulfurimonas denitrificans (strain ATCC 33889 / DSM 1251) (Thiomicrospira denitrificans (strain ATCC 33889 / DSM 1251)), this protein is S-adenosylmethionine:tRNA ribosyltransferase-isomerase.